We begin with the raw amino-acid sequence, 405 residues long: Opine dehydrogenase (405 aa).

This sequence belongs to the lysopine/nopaline/octopine/opine/vitopine dehydrogenases family.

The chain is Opine dehydrogenase from Haliotis discus hannai (Japanese abalone).